We begin with the raw amino-acid sequence, 96 residues long: Co-chaperonin GroES (96 aa).

This sequence belongs to the GroES chaperonin family. As to quaternary structure, heptamer of 7 subunits arranged in a ring. Interacts with the chaperonin GroEL.

It localises to the cytoplasm. Functionally, together with the chaperonin GroEL, plays an essential role in assisting protein folding. The GroEL-GroES system forms a nano-cage that allows encapsulation of the non-native substrate proteins and provides a physical environment optimized to promote and accelerate protein folding. GroES binds to the apical surface of the GroEL ring, thereby capping the opening of the GroEL channel. The sequence is that of Co-chaperonin GroES from Hydrogenovibrio crunogenus (strain DSM 25203 / XCL-2) (Thiomicrospira crunogena).